The following is a 651-amino-acid chain: Translation initiation factor eIF2B subunit delta (651 aa).

Residues 1 to 108 (MSESEAKSRS…NERNVKKSTL (108 aa)) are disordered. Ser2 is modified (N-acetylserine). Positions 11 to 28 (ATPPSKAKQATPTTTAAA) are enriched in low complexity. 2 stretches are compositionally biased toward basic and acidic residues: residues 30-49 (GEKKLTNKELKELKKQEKAA) and 76-90 (KQLQREQQQKREQKQ). Position 106 is a phosphoserine (Ser106). Thr121 is modified (phosphothreonine). A disordered region spans residues 566–600 (AMENKPKGNKIGGKKGSEGESKDASNEEDSNSKNI). A compositionally biased stretch (basic and acidic residues) spans 580–590 (KGSEGESKDAS).

The protein belongs to the eIF-2B alpha/beta/delta subunits family. As to quaternary structure, component of the translation initiation factor 2B (eIF2B) complex which is a heterodecamer of two sets of five different subunits: alpha, beta, gamma, delta and epsilon. Subunits alpha, beta and delta comprise a regulatory subcomplex and subunits epsilon and gamma comprise a catalytic subcomplex. Within the complex, the hexameric regulatory complex resides at the center, with the two heterodimeric catalytic subcomplexes bound on opposite sides.

The protein localises to the cytoplasm. It localises to the cytosol. In terms of biological role, acts as a component of the translation initiation factor 2B (eIF2B) complex, which catalyzes the exchange of GDP for GTP on the eukaryotic initiation factor 2 (eIF2) complex gamma subunit. Its guanine nucleotide exchange factor activity is repressed when bound to eIF2 complex phosphorylated on the alpha subunit, thereby limiting the amount of methionyl-initiator methionine tRNA available to the ribosome and consequently global translation is repressed. It activates the synthesis of GCN4 in yeast under amino acid starvation conditions by suppressing the inhibitory effects of multiple AUG codons present in the leader of GCN4 mRNA. It may promote either repression or activation of GCN4 expression depending on amino acid availability. GCD2 is also required for cell viability. Its function can partially be replaced by GCN3 under normal growth conditions in GCD2-defective mutants, under AA starvation conditions GCN3 is an antagonist (GCN4 translational activator). The protein is Translation initiation factor eIF2B subunit delta (GCD2) of Saccharomyces cerevisiae (strain ATCC 204508 / S288c) (Baker's yeast).